The primary structure comprises 100 residues: Large ribosomal subunit protein uL23 (100 aa).

The protein belongs to the universal ribosomal protein uL23 family. Part of the 50S ribosomal subunit. Contacts protein L29, and trigger factor when it is bound to the ribosome.

Functionally, one of the early assembly proteins it binds 23S rRNA. One of the proteins that surrounds the polypeptide exit tunnel on the outside of the ribosome. Forms the main docking site for trigger factor binding to the ribosome. This chain is Large ribosomal subunit protein uL23, found in Prochlorococcus marinus (strain AS9601).